Reading from the N-terminus, the 139-residue chain is Invertebrate-type lysozyme 3 (139 aa).

The first 18 residues, 1–18 (MFVKSLVFLTIAVAYASA), serve as a signal peptide directing secretion. The I-type lysozyme domain maps to 19-138 (DCLHCICMRE…WNGIKSCCGC (120 aa)). Intrachain disulfides connect cysteine 20/cysteine 106, cysteine 23/cysteine 138, cysteine 25/cysteine 31, cysteine 36/cysteine 45, cysteine 58/cysteine 86, cysteine 76/cysteine 82, and cysteine 98/cysteine 120. The Proton donor role is filled by glutamate 28. The active-site Nucleophile is aspartate 39. Residue 51 to 57 (KLPYYED) participates in substrate binding. Residues tyrosine 90 and 113-115 (HNG) each bind substrate.

It belongs to the glycosyl hydrolase 22 family. Type-I lysozyme subfamily. Expressed in pharynx grinder muscle pm7, isthmus marginal cell mc2 and pharyngeal muscle cell pm5, intestinal cells and at lower levels in coelomocytes and epidermis. Expressed at low levels in intestine.

Its subcellular location is the late endosome lumen. It localises to the recycling endosome lumen. The protein localises to the lysosome lumen. The protein resides in the secreted. It catalyses the reaction Hydrolysis of (1-&gt;4)-beta-linkages between N-acetylmuramic acid and N-acetyl-D-glucosamine residues in a peptidoglycan and between N-acetyl-D-glucosamine residues in chitodextrins.. In terms of biological role, has bacteriolytic activity against Gram-positive bacteria. Plays a role in defense against bacterial pathogens. Involved in pharyngeal grinder function by enabling proper lysis of ingested bacteria. This is Invertebrate-type lysozyme 3 from Caenorhabditis elegans.